A 116-amino-acid chain; its full sequence is Ig heavy chain V region 1B43 (116 aa).

Positions methionine 1–serine 18 are cleaved as a signal peptide. Residues aspartate 19 to threonine 48 form a framework-1 region. An intrachain disulfide couples cysteine 40 to cysteine 114. Residues serine 49–tryptophan 53 are complementarity-determining-1. Residues histidine 54–methionine 67 are framework-2. Residues glycine 68 to serine 84 form a complementarity-determining-2 region. Positions arginine 85–arginine 116 are framework-3.

The chain is Ig heavy chain V region 1B43 from Mus musculus (Mouse).